The sequence spans 209 residues: Large ribosomal subunit protein uL4 (209 aa).

The segment at 50–78 (STLKKGEVSGGGKKPYQQKHTGRARQGSI) is disordered.

It belongs to the universal ribosomal protein uL4 family. As to quaternary structure, part of the 50S ribosomal subunit.

Its function is as follows. One of the primary rRNA binding proteins, this protein initially binds near the 5'-end of the 23S rRNA. It is important during the early stages of 50S assembly. It makes multiple contacts with different domains of the 23S rRNA in the assembled 50S subunit and ribosome. Forms part of the polypeptide exit tunnel. This is Large ribosomal subunit protein uL4 from Mycoplasmoides gallisepticum (strain R(low / passage 15 / clone 2)) (Mycoplasma gallisepticum).